The following is a 326-amino-acid chain: Tetraacyldisaccharide 4'-kinase (326 aa).

Position 52-59 (52-59) interacts with ATP; the sequence is TLGGAGKT.

Belongs to the LpxK family.

The catalysed reaction is a lipid A disaccharide + ATP = a lipid IVA + ADP + H(+). The protein operates within glycolipid biosynthesis; lipid IV(A) biosynthesis; lipid IV(A) from (3R)-3-hydroxytetradecanoyl-[acyl-carrier-protein] and UDP-N-acetyl-alpha-D-glucosamine: step 6/6. Its function is as follows. Transfers the gamma-phosphate of ATP to the 4'-position of a tetraacyldisaccharide 1-phosphate intermediate (termed DS-1-P) to form tetraacyldisaccharide 1,4'-bis-phosphate (lipid IVA). This Methylobacterium radiotolerans (strain ATCC 27329 / DSM 1819 / JCM 2831 / NBRC 15690 / NCIMB 10815 / 0-1) protein is Tetraacyldisaccharide 4'-kinase.